Here is a 319-residue protein sequence, read N- to C-terminus: Glutathione synthetase (319 aa).

In terms of domain architecture, ATP-grasp spans K125 to E311. An ATP-binding site is contributed by H151 to G207. Mg(2+)-binding residues include E281 and N283.

It belongs to the prokaryotic GSH synthase family. Requires Mg(2+) as cofactor. Mn(2+) serves as cofactor.

It catalyses the reaction gamma-L-glutamyl-L-cysteine + glycine + ATP = glutathione + ADP + phosphate + H(+). The protein operates within sulfur metabolism; glutathione biosynthesis; glutathione from L-cysteine and L-glutamate: step 2/2. This is Glutathione synthetase from Yersinia pestis.